Reading from the N-terminus, the 2098-residue chain is Non-reducing polyketide synthase crz7 (2098 aa).

One can recognise a Starter acyltransferase (SAT) domain in the interval 8–243; the sequence is ILFGDQTVDP…IKLPITAAFH (236 aa). Positions 364 to 789 constitute a Ketosynthase family 3 (KS3) domain; sequence SSDIAIIGFA…GGNTSLLLED (426 aa). Active-site for beta-ketoacyl synthase activity residues include Cys-532, His-667, and His-706. Residues 887-1211 enclose the Malonyl-CoA:ACP transacylase (MAT) domain; it reads IFLFTGQGSQ…IANAYNSGVK (325 aa). The N-terminal hotdog fold stretch occupies residues 1270-1404; the sequence is TCLQGVENET…CTVMYGDGQQ (135 aa). A PKS/mFAS DH domain is found at 1270–1578; that stretch reads TCLQGVENET…FQQMKRTTLQ (309 aa). His-1305 functions as the Proton acceptor; for dehydratase activity in the catalytic mechanism. The C-terminal hotdog fold stretch occupies residues 1431–1578; sequence IHRMLKEMIY…FQQMKRTTLQ (148 aa). Residue Asp-1491 is the Proton donor; for dehydratase activity of the active site. The Carrier 1 domain occupies 1613–1690; it reads QSPSAGFSKV…ELRAFFLDKM (78 aa). Ser-1650 carries the O-(pantetheine 4'-phosphoryl)serine modification. A disordered region spans residues 1693 to 1725; it reads PQATANDDDSDDSSEDEDPGYSRSQSNSTISTP. The segment covering 1698–1711 has biased composition (acidic residues); it reads NDDDSDDSSEDEDP. Residues 1714-1724 show a composition bias toward polar residues; that stretch reads SRSQSNSTIST. The Carrier 2 domain occupies 1725 to 1802; that stretch reads PEEPDVVSIL…DVQKALGPTS (78 aa). Position 1762 is an O-(pantetheine 4'-phosphoryl)serine (Ser-1762). Positions 1844–2080 are thioesterase (TE) domain; that stretch reads LFLLPDGAGS…VSGNHFSIMF (237 aa).

Requires pantetheine 4'-phosphate as cofactor.

It participates in secondary metabolite biosynthesis. In terms of biological role, non-reducing polyketide synthase; part of the gene cluster that mediates the biosynthesis of the red pigment cristazarin, a naphthazarin derivative. The polyketide product of crz7 is likely 2-acetyl-1,3,6,8-tetrahydoxynaphthalene (AT4HN) from which a probable biosynthetic route of cristazarin can be deduced. The presence of two O-methyltransferases (crz1 and crz2), an enoyl reductase (crz5), an oxidase (crz8), and a short-chain dehydrogenase (crz9) encoded in the cristazarin biosynthetic cluster is consistent with methylation of a hydroxyl group, addition of two hydroxyl groups to the naphthalene core ring, and reduction of the acetyl side chain. This chain is Non-reducing polyketide synthase crz7, found in Cladonia metacorallifera (Lichen-forming fungus).